We begin with the raw amino-acid sequence, 399 residues long: Putative cytochrome P450 133B2 (399 aa).

C348 lines the heme pocket.

The protein belongs to the cytochrome P450 family. Heme serves as cofactor.

This is Putative cytochrome P450 133B2 (cyp133B2) from Xylella fastidiosa (strain Temecula1 / ATCC 700964).